The chain runs to 312 residues: Deoxyribonuclease Tat-D (312 aa).

The a divalent metal cation site is built by Glu124, His161, His187, and Asp235.

It belongs to the metallo-dependent hydrolases superfamily. TatD-type hydrolase family. A divalent metal cation serves as cofactor.

The protein localises to the cytoplasm. Its subcellular location is the nucleus. Its function is as follows. Has both endo- and exonuclease activities. Incises double-stranded DNA without obvious specificity via its endonuclease activity and excises the DNA from the 3'-to 5'-end by its exonuclease activity. May have a role in apoptosis. This chain is Deoxyribonuclease Tat-D, found in Schizosaccharomyces pombe (strain 972 / ATCC 24843) (Fission yeast).